Consider the following 447-residue polypeptide: Methyl-coenzyme M reductase II subunit beta (447 aa).

Tyr-368 lines the coenzyme M pocket. Gly-370 contacts coenzyme B.

It belongs to the methyl-coenzyme M reductase beta subunit family. In terms of assembly, MCR is a hexamer of two alpha, two beta, and two gamma chains, forming a dimer of heterotrimers. It depends on coenzyme F430 as a cofactor.

The catalysed reaction is coenzyme B + methyl-coenzyme M = methane + coenzyme M-coenzyme B heterodisulfide. It participates in one-carbon metabolism; methyl-coenzyme M reduction; methane from methyl-coenzyme M: step 1/1. Its function is as follows. Component of the methyl-coenzyme M reductase (MCR) I that catalyzes the reductive cleavage of methyl-coenzyme M (CoM-S-CH3 or 2-(methylthio)ethanesulfonate) using coenzyme B (CoB or 7-mercaptoheptanoylthreonine phosphate) as reductant which results in the production of methane and the mixed heterodisulfide of CoB and CoM (CoM-S-S-CoB). This is the final step in methanogenesis. The chain is Methyl-coenzyme M reductase II subunit beta (mrtB) from Methanocaldococcus jannaschii (strain ATCC 43067 / DSM 2661 / JAL-1 / JCM 10045 / NBRC 100440) (Methanococcus jannaschii).